The chain runs to 1894 residues: Plexin-A2 (1894 aa).

The signal sequence occupies residues 1–34 (MEQRRFYLRAMQADNLSVVLLSVAWLLLARGTTG). N-linked (GlcNAc...) asparagine glycans are attached at residues N15 and N76. The Sema domain maps to 35–508 (MPQYSTFHSE…SERQVTRVPV (474 aa)). Over 35 to 1237 (MPQYSTFHSE…VISDSLLTLP (1203 aa)) the chain is Extracellular. 2 disulfide bridges follow: C94–C103 and C129–C137. N-linked (GlcNAc...) asparagine glycans are attached at residues N163 and N327. 8 disulfides stabilise this stretch: C284/C405, C300/C356, C374/C393, C511/C528, C517/C559, C520/C537, C531/C543, and C594/C613. N598, N696, and N756 each carry an N-linked (GlcNAc...) asparagine glycan. IPT/TIG domains follow at residues 858 to 951 (PQIT…QYTF), 954 to 1037 (PSVL…QFEY), 1041 to 1139 (PRVQ…KFIY), and 1143 to 1228 (PTFE…SVSV). N-linked (GlcNAc...) asparagine glycosylation is found at N1180 and N1205. The helical transmembrane segment at 1238 to 1258 (AIISIAAGGSLLLIIVIIVLI) threads the bilayer. The Cytoplasmic segment spans residues 1259–1894 (AYKRKSREND…HLINAMSIES (636 aa)). The stretch at 1261–1310 (KRKSRENDLTLKRLQMQMDNLESRVALECKEAFAELQTDINELTSDLDRS) forms a coiled coil. Residue S1612 is modified to Phosphoserine.

The protein belongs to the plexin family. Homodimer. Interacts with RND1. Interacts directly with NRP1 and NRP2. The PLXNA2 homodimer interacts with a SEMA6A homodimer, giving rise to a heterotetramer.

The protein localises to the cell membrane. Its function is as follows. Coreceptor for SEMA3A and SEMA6A. Necessary for signaling by SEMA6A and class 3 semaphorins and subsequent remodeling of the cytoskeleton. Plays a role in axon guidance, invasive growth and cell migration. Class 3 semaphorins bind to a complex composed of a neuropilin and a plexin. The plexin modulates the affinity of the complex for specific semaphorins, and its cytoplasmic domain is required for the activation of down-stream signaling events in the cytoplasm. This chain is Plexin-A2 (Plxna2), found in Mus musculus (Mouse).